We begin with the raw amino-acid sequence, 321 residues long: Cytochrome c biogenesis protein CcsA (321 aa).

8 helical membrane passes run 9–29, 44–64, 71–91, 98–118, 143–163, 225–245, 252–272, and 286–306; these read ILTH…LMNL, GMIA…IYSG, LYES…VPYF, FSAI…SGLL, MLLS…LLVI, VISL…VWAN, WNWD…AIYL, and AIVA…VNLL.

Belongs to the CcmF/CycK/Ccl1/NrfE/CcsA family. In terms of assembly, may interact with Ccs1.

The protein localises to the plastid. It localises to the chloroplast thylakoid membrane. Its function is as follows. Required during biogenesis of c-type cytochromes (cytochrome c6 and cytochrome f) at the step of heme attachment. This is Cytochrome c biogenesis protein CcsA from Acorus calamus var. americanus (American sweet flag).